Consider the following 122-residue polypeptide: Acidic phospholipase A2 1 (122 aa).

7 disulfide bridges follow: Cys-26/Cys-115, Cys-28/Cys-44, Cys-43/Cys-94, Cys-49/Cys-122, Cys-50/Cys-87, Cys-57/Cys-81, and Cys-75/Cys-85. Tyr-27, Gly-29, and Gly-31 together coordinate Ca(2+). His-47 is an active-site residue. Residue Asp-48 coordinates Ca(2+). Residue Asp-88 is part of the active site.

The protein belongs to the phospholipase A2 family. Group II subfamily. D49 sub-subfamily. As to quaternary structure, homodimer. Ca(2+) serves as cofactor. In terms of tissue distribution, expressed by the venom gland.

It is found in the secreted. It carries out the reaction a 1,2-diacyl-sn-glycero-3-phosphocholine + H2O = a 1-acyl-sn-glycero-3-phosphocholine + a fatty acid + H(+). Its function is as follows. PLA2 catalyzes the calcium-dependent hydrolysis of the 2-acyl groups in 3-sn-phosphoglycerides. The sequence is that of Acidic phospholipase A2 1 from Protobothrops mucrosquamatus (Taiwan habu).